The primary structure comprises 478 residues: Zinc metalloproteinase/disintegrin ussurin (478 aa).

A signal peptide spans Met1–Ser20. The propeptide occupies Ile21–Thr190. The Peptidase M12B domain maps to Arg193 to Pro389. Glu196 and Asp280 together coordinate Ca(2+). 3 disulfide bridges follow: Cys304/Cys384, Cys344/Cys368, and Cys346/Cys351. Residue His329 participates in Zn(2+) binding. Residue Glu330 is part of the active site. Positions 333 and 339 each coordinate Zn(2+). The Ca(2+) site is built by Cys384 and Asn387. Residues Leu390–Cys413 constitute a propeptide that is removed on maturation. One can recognise a Disintegrin domain in the interval Thr397–Ala478. 6 cysteine pairs are disulfide-bonded: Cys411-Cys426, Cys413-Cys421, Cys420-Cys443, Cys434-Cys440, Cys439-Cys464, and Cys452-Cys471. The Cell attachment site motif lies at Arg456–Asp458.

Belongs to the venom metalloproteinase (M12B) family. P-II subfamily. P-IIa sub-subfamily. In terms of assembly, monomer. Requires Zn(2+) as cofactor. Expressed by the venom gland.

The protein resides in the secreted. Its function is as follows. Impairs hemostasis in the envenomed animal. Functionally, inhibits platelet aggregation induced by ADP, thrombin, platelet-activating factor and collagen. Acts by inhibiting fibrinogen interaction with platelet receptors GPIIb/GPIIIa (ITGA2B/ITGB3). This chain is Zinc metalloproteinase/disintegrin ussurin, found in Gloydius ussuriensis (Ussuri mamushi).